The chain runs to 428 residues: Spermidine/putrescine import ATP-binding protein PotA (428 aa).

In terms of domain architecture, ABC transporter spans 6-238 (IEFKNVSKTY…PINHFVADFI (233 aa)). 40–47 (GASGSGKS) serves as a coordination point for ATP.

The protein belongs to the ABC transporter superfamily. Spermidine/putrescine importer (TC 3.A.1.11.1) family. The complex is composed of two ATP-binding proteins (PotA), two transmembrane proteins (PotB and PotC) and a solute-binding protein (PotD).

It localises to the cell membrane. The catalysed reaction is ATP + H2O + polyamine-[polyamine-binding protein]Side 1 = ADP + phosphate + polyamineSide 2 + [polyamine-binding protein]Side 1.. Its function is as follows. Part of the ABC transporter complex PotABCD involved in spermidine/putrescine import. Responsible for energy coupling to the transport system. The protein is Spermidine/putrescine import ATP-binding protein PotA of Lactococcus lactis subsp. lactis (strain IL1403) (Streptococcus lactis).